A 247-amino-acid polypeptide reads, in one-letter code: Protein At-4/1 (247 aa).

Coiled-coil stretches lie at residues 39-126 (VESS…YKIR) and 182-247 (LLME…LSSS).

As to quaternary structure, interacts with viral tomato spotted wilt virus (TSWV) movement protein NSM, which is involved in cell-to cell spread of viral genome and enlargement of the host plasmodesmata size exclusion limit (SEL). In terms of tissue distribution, expressed in leaves (at protein level).

Its subcellular location is the endoplasmic reticulum. It is found in the cell junction. It localises to the plasmodesma. Its function is as follows. Involved in intra- and inter-cellular trafficking through plasmodesmata (PD). This is Protein At-4/1 from Arabidopsis thaliana (Mouse-ear cress).